The following is a 620-amino-acid chain: 1-deoxy-D-xylulose-5-phosphate synthase (620 aa).

Residues H80 and 121-123 (GHS) contribute to the thiamine diphosphate site. Residue D152 participates in Mg(2+) binding. Residues 153-154 (GA), N181, Y288, and E370 contribute to the thiamine diphosphate site. A Mg(2+)-binding site is contributed by N181.

It belongs to the transketolase family. DXPS subfamily. As to quaternary structure, homodimer. Mg(2+) serves as cofactor. The cofactor is thiamine diphosphate.

It carries out the reaction D-glyceraldehyde 3-phosphate + pyruvate + H(+) = 1-deoxy-D-xylulose 5-phosphate + CO2. The protein operates within metabolic intermediate biosynthesis; 1-deoxy-D-xylulose 5-phosphate biosynthesis; 1-deoxy-D-xylulose 5-phosphate from D-glyceraldehyde 3-phosphate and pyruvate: step 1/1. Its function is as follows. Catalyzes the acyloin condensation reaction between C atoms 2 and 3 of pyruvate and glyceraldehyde 3-phosphate to yield 1-deoxy-D-xylulose-5-phosphate (DXP). This Salmonella choleraesuis (strain SC-B67) protein is 1-deoxy-D-xylulose-5-phosphate synthase.